The following is an 87-amino-acid chain: Toxin ICK-41 (87 aa).

The N-terminal stretch at 1–19 is a signal peptide; it reads MKPIVYMLLFCAFTVVILG. Cystine bridges form between cysteine 40–cysteine 54, cysteine 40–cysteine 77, cysteine 53–cysteine 66, and cysteine 80–cysteine 87.

The protein belongs to the neurotoxin 27 (Jztx-72) family. ICK-41 subfamily. In terms of tissue distribution, expressed by the venom gland.

It is found in the secreted. Its function is as follows. Probable neurotoxin with ion channel impairing activity. This chain is Toxin ICK-41, found in Trittame loki (Brush-footed trapdoor spider).